The primary structure comprises 669 residues: DNA ligase (669 aa).

NAD(+)-binding positions include 33–37, 82–83, and Glu115; these read DVTYD and SL. Catalysis depends on Lys117, which acts as the N6-AMP-lysine intermediate. Arg138, Glu172, Lys286, and Lys310 together coordinate NAD(+). Zn(2+)-binding residues include Cys401, Cys404, Cys417, and Cys422. Residues 589–669 enclose the BRCT domain; the sequence is VDSSFLFGKK…DIKNLVNLDD (81 aa).

It belongs to the NAD-dependent DNA ligase family. LigA subfamily. Mg(2+) serves as cofactor. Requires Mn(2+) as cofactor.

It catalyses the reaction NAD(+) + (deoxyribonucleotide)n-3'-hydroxyl + 5'-phospho-(deoxyribonucleotide)m = (deoxyribonucleotide)n+m + AMP + beta-nicotinamide D-nucleotide.. In terms of biological role, DNA ligase that catalyzes the formation of phosphodiester linkages between 5'-phosphoryl and 3'-hydroxyl groups in double-stranded DNA using NAD as a coenzyme and as the energy source for the reaction. It is essential for DNA replication and repair of damaged DNA. The polypeptide is DNA ligase (Borrelia duttonii (strain Ly)).